A 199-amino-acid polypeptide reads, in one-letter code: OPA3-like protein (199 aa).

Residues R98–S141 are a coiled coil.

It belongs to the OPA3 family.

This Dictyostelium discoideum (Social amoeba) protein is OPA3-like protein.